The sequence spans 220 residues: Probable transcriptional regulator NRG2 (220 aa).

2 C2H2-type zinc fingers span residues 153–175 and 181–205; these read HFCK…NRIH and HICP…YRTH.

Its subcellular location is the nucleus. Transcriptional repressor. This Saccharomyces cerevisiae (strain ATCC 204508 / S288c) (Baker's yeast) protein is Probable transcriptional regulator NRG2 (NRG2).